The chain runs to 429 residues: MSAILDIHARQIFDSRGNPTVEVDVYTENGIMGRAAVPSGASTGEHEAVELRDGGKDFMGKGVQKAVDNVNGEIADHLLGFSVFEQNLIDQTMIDLDGTPNKSKLGANAILGVSLAVAKAAANELNMPLYRYVGGVSANTLPVPMMNIINGGSHSDAPIAFQEFMIMPVMADSFSHALKMGTEIFHNLKNVLHDRGLSTAVGDEGGFAPTLDGTEDALDTILKAIEKAGYKPGKEVMIALDCAAAEFFVDGKYDYTKFEGDKGKVRTSEEQADYLAELASKYPIISIEDGMDENDWEGWKAVTDKIGDKVQLVGDDLFVTNVERLGRGIKESIANSILIKVNQIGTLTETIAAVNMAHNAGYTSVMSHRSGETEDNTIADLAVALNTGQIKTGSASRSDRMAKYNQLLRIEEELGDVAFYPQDKAFKIK.

(2R)-2-phosphoglycerate is bound at residue Gln162. Glu204 (proton donor) is an active-site residue. Mg(2+) contacts are provided by Asp241, Glu288, and Asp315. Residues Lys340, Arg369, Ser370, and Lys391 each contribute to the (2R)-2-phosphoglycerate site. Residue Lys340 is the Proton acceptor of the active site.

The protein belongs to the enolase family. It depends on Mg(2+) as a cofactor.

It localises to the cytoplasm. Its subcellular location is the secreted. The protein resides in the cell surface. It carries out the reaction (2R)-2-phosphoglycerate = phosphoenolpyruvate + H2O. It participates in carbohydrate degradation; glycolysis; pyruvate from D-glyceraldehyde 3-phosphate: step 4/5. Its function is as follows. Catalyzes the reversible conversion of 2-phosphoglycerate (2-PG) into phosphoenolpyruvate (PEP). It is essential for the degradation of carbohydrates via glycolysis. The protein is Enolase of Christiangramia forsetii (strain DSM 17595 / CGMCC 1.15422 / KT0803) (Gramella forsetii).